We begin with the raw amino-acid sequence, 44 residues long: Photosystem I reaction center subunit IX (44 aa).

The helical transmembrane segment at 7-27 (YLSVAPVVSTLWFAALAGLLI) threads the bilayer.

This sequence belongs to the PsaJ family.

The protein localises to the plastid. It localises to the chloroplast thylakoid membrane. Functionally, may help in the organization of the PsaE and PsaF subunits. This is Photosystem I reaction center subunit IX from Lotus japonicus (Lotus corniculatus var. japonicus).